We begin with the raw amino-acid sequence, 710 residues long: Cyclin-dependent kinase G-2 (710 aa).

Residues 1–350 (MAAGRHGGYR…ETPEPVKPPH (350 aa)) are disordered. The span at 8 to 30 (GYRDYEARERELDAEASRRSKEQ) shows a compositional bias: basic and acidic residues. A compositionally biased stretch (basic residues) spans 31-40 (QHHHHPSGRH). Basic and acidic residues predominate over residues 41–64 (QRGDSDPRCEADRRRDGGRSRGGR). The segment covering 124–133 (SVVAASASSP) has biased composition (low complexity). Residues 144-163 (WDRDSPKPMHSDVAKGKKAV) show a composition bias toward basic and acidic residues. Pro residues predominate over residues 170 to 182 (LPLPPPPPLPPQD). Composition is skewed to basic and acidic residues over residues 183 to 195 (HIPE…KSPM) and 209 to 218 (LQEHAESRVM). Acidic residues predominate over residues 299 to 308 (DENEDLEVDK). Residues 335–344 (YEVRRSETPE) are compositionally biased toward basic and acidic residues. The Protein kinase domain occupies 365 to 656 (FERLNKINEG…ADAALQHEWF (292 aa)). ATP is bound by residues 371-379 (INEGTYGVV) and Lys-394. Thr-375 is modified (phosphothreonine). The residue at position 376 (Tyr-376) is a Phosphotyrosine. Residue Asp-489 is the Proton acceptor of the active site. Phosphoserine is present on Ser-516. Thr-522 is modified (phosphothreonine).

Belongs to the protein kinase superfamily. CMGC Ser/Thr protein kinase family. CDC2/CDKX subfamily.

It catalyses the reaction L-seryl-[protein] + ATP = O-phospho-L-seryl-[protein] + ADP + H(+). It carries out the reaction L-threonyl-[protein] + ATP = O-phospho-L-threonyl-[protein] + ADP + H(+). The enzyme catalyses [DNA-directed RNA polymerase] + ATP = phospho-[DNA-directed RNA polymerase] + ADP + H(+). This Oryza sativa subsp. indica (Rice) protein is Cyclin-dependent kinase G-2 (CDKG-2).